The chain runs to 62 residues: Large ribosomal subunit protein bL33 (62 aa).

This sequence belongs to the bacterial ribosomal protein bL33 family.

The chain is Large ribosomal subunit protein bL33 from Bacteroides thetaiotaomicron (strain ATCC 29148 / DSM 2079 / JCM 5827 / CCUG 10774 / NCTC 10582 / VPI-5482 / E50).